The sequence spans 196 residues: Putative NADH dehydrogenase/NAD(P)H nitroreductase XOO4023 (196 aa).

The protein belongs to the nitroreductase family. HadB/RutE subfamily. Requires FMN as cofactor.

The chain is Putative NADH dehydrogenase/NAD(P)H nitroreductase XOO4023 from Xanthomonas oryzae pv. oryzae (strain MAFF 311018).